The sequence spans 43 residues: Photosystem I reaction center subunit IX (43 aa).

Residues 7–27 (YLSVAPVLSALWFGALAGLLI) form a helical membrane-spanning segment.

It belongs to the PsaJ family.

It localises to the plastid. The protein localises to the chloroplast thylakoid membrane. Functionally, may help in the organization of the PsaE and PsaF subunits. The protein is Photosystem I reaction center subunit IX of Oenothera argillicola (Appalachian evening primrose).